A 266-amino-acid polypeptide reads, in one-letter code: Small ribosomal subunit protein uS2 (266 aa).

Belongs to the universal ribosomal protein uS2 family.

This is Small ribosomal subunit protein uS2 from Corynebacterium diphtheriae (strain ATCC 700971 / NCTC 13129 / Biotype gravis).